The following is a 716-amino-acid chain: MMQESATETISNSSMNQNGMSTLSSQLDAGSRDGRSSGDTSSEVSTVELLHLQQQQALQAARQLLLQQQTSGLKSPKSSDKQRPLQVPVSVAMMTPQVITPQQMQQILQQQVLSPQQLQALLQQQQAVMLQQQQLQEFYKKQQEQLHLQLLQQQQQQQQQQQQQQQQQQQQQQQQQQQQQQQQQQQQQQQQQHPGKQAKEQQQQQQQQQQLAAQQLVFQQQLLQMQQLQQQQHLLSLQRQGLISIPPGQAALPVQSLPQAGLSPAEIQQLWKEVTGVHSMEDNGIKHGGLDLTTNNSSSTTSSTTSKASPPITHHSIVNGQSSVLNARRDSSSHEETGASHTLYGHGVCKWPGCESICEDFGQFLKHLNNEHALDDRSTAQCRVQMQVVQQLEIQLSKERERLQAMMTHLHMRPSEPKPSPKPLNLVSSVTMSKNMLETSPQSLPQTPTTPTAPVTPITQGPSVITPASVPNVGAIRRRHSDKYNIPMSSEIAPNYEFYKNADVRPPFTYATLIRQAIMESSDRQLTLNEIYSWFTRTFAYFRRNAATWKNAVRHNLSLHKCFVRVENVKGAVWTVDEVEYQKRRSQKITGSPTLVKNIPTSLGYGAALNASLQAALAESSLPLLSNPGLINNASSGLLQAVHEDLNGSLDHIDSNGNSSPGCSPQPHIHSIHVKEEPVIAEDEDCPMSLVTTANHSPELEDDREIEEEPLSEDLE.

Polar residues predominate over residues 1 to 28 (MMQESATETISNSSMNQNGMSTLSSQLD). Disordered stretches follow at residues 1 to 45 (MMQE…SEVS) and 286 to 340 (KHGG…TGAS). Positions 293–306 (TTNNSSSTTSSTTS) are enriched in low complexity. Over residues 316-325 (SIVNGQSSVL) the composition is skewed to polar residues. The segment covering 327–338 (ARRDSSSHEETG) has biased composition (basic and acidic residues). A C2H2-type zinc finger spans residues 347-372 (GVCKWPGCESICEDFGQFLKHLNNEH). The leucine-zipper stretch occupies residues 389 to 410 (VQQLEIQLSKERERLQAMMTHL). Residues 423-427 (PLNLV) form a CTBP1-binding region. Positions 439–460 (TSPQSLPQTPTTPTAPVTPITQ) are enriched in low complexity. The tract at residues 439 to 466 (TSPQSLPQTPTTPTAPVTPITQGPSVIT) is disordered. A DNA-binding region (fork-head) is located at residues 505–595 (RPPFTYATLI…SQKITGSPTL (91 aa)). Disordered regions lie at residues 650 to 669 (LDHIDSNGNSSPGCSPQPHI) and 679 to 716 (VIAEDEDCPMSLVTTANHSPELEDDREIEEEPLSEDLE). Acidic residues predominate over residues 700–716 (LEDDREIEEEPLSEDLE).

Forms homodimers and heterodimers with FOXP1 and FOXP4. Dimerization is required for DNA-binding. Interacts with CTBP1. Interacts with FOXP1. Interacts with TBR1. Interacts with ZMYM2.

The protein localises to the nucleus. In terms of biological role, transcriptional repressor that may play a role in the specification and differentiation of lung epithelium. May also play a role in developing neural, gastrointestinal and cardiovascular tissues. Can act with CTBP1 to synergistically repress transcription but CTPBP1 is not essential. Plays a role in synapse formation by regulating SRPX2 levels. The protein is Forkhead box protein P2 (FOXP2) of Pan paniscus (Pygmy chimpanzee).